Reading from the N-terminus, the 177-residue chain is RNA silencing suppressor (177 aa).

As to quaternary structure, homooctamer. The eight monomers assemble into a closed ring that binds RNA.

The protein resides in the host cytoplasm. Its function is as follows. Acts as a suppressor of RNA-mediated gene silencing, also known as post-transcriptional gene silencing (PTGS), a mechanism of plant viral defense that limits the accumulation of viral RNAs. Binds to ssRNAs and dsRNAs in vitro. Also functions as a replication enhancer. This chain is RNA silencing suppressor, found in Beta vulgaris (Sugar beet).